The following is a 166-amino-acid chain: NAD(P)H-quinone oxidoreductase subunit I, chloroplastic (166 aa).

4Fe-4S ferredoxin-type domains are found at residues 55-84 and 95-124; these read GRIH…VDWK and LNYS…MTEE. The [4Fe-4S] cluster site is built by Cys64, Cys67, Cys70, Cys74, Cys104, Cys107, Cys110, and Cys114.

The protein belongs to the complex I 23 kDa subunit family. As to quaternary structure, NDH is composed of at least 16 different subunits, 5 of which are encoded in the nucleus. [4Fe-4S] cluster is required as a cofactor.

It localises to the plastid. The protein resides in the chloroplast thylakoid membrane. The catalysed reaction is a plastoquinone + NADH + (n+1) H(+)(in) = a plastoquinol + NAD(+) + n H(+)(out). It catalyses the reaction a plastoquinone + NADPH + (n+1) H(+)(in) = a plastoquinol + NADP(+) + n H(+)(out). Its function is as follows. NDH shuttles electrons from NAD(P)H:plastoquinone, via FMN and iron-sulfur (Fe-S) centers, to quinones in the photosynthetic chain and possibly in a chloroplast respiratory chain. The immediate electron acceptor for the enzyme in this species is believed to be plastoquinone. Couples the redox reaction to proton translocation, and thus conserves the redox energy in a proton gradient. This Palafoxia arida (Spanish needles) protein is NAD(P)H-quinone oxidoreductase subunit I, chloroplastic.